The chain runs to 456 residues: Argininosuccinate lyase (456 aa).

Belongs to the lyase 1 family. Argininosuccinate lyase subfamily.

The protein resides in the cytoplasm. It catalyses the reaction 2-(N(omega)-L-arginino)succinate = fumarate + L-arginine. It functions in the pathway amino-acid biosynthesis; L-arginine biosynthesis; L-arginine from L-ornithine and carbamoyl phosphate: step 3/3. This Listeria monocytogenes serotype 4b (strain F2365) protein is Argininosuccinate lyase.